We begin with the raw amino-acid sequence, 234 residues long: Biosynthetic peptidoglycan transglycosylase (234 aa).

Residues 8-28 (VIGCFAAGVVALNLYFFAAIA) traverse the membrane as a helical segment.

The protein belongs to the glycosyltransferase 51 family.

The protein resides in the cell inner membrane. It carries out the reaction [GlcNAc-(1-&gt;4)-Mur2Ac(oyl-L-Ala-gamma-D-Glu-L-Lys-D-Ala-D-Ala)](n)-di-trans,octa-cis-undecaprenyl diphosphate + beta-D-GlcNAc-(1-&gt;4)-Mur2Ac(oyl-L-Ala-gamma-D-Glu-L-Lys-D-Ala-D-Ala)-di-trans,octa-cis-undecaprenyl diphosphate = [GlcNAc-(1-&gt;4)-Mur2Ac(oyl-L-Ala-gamma-D-Glu-L-Lys-D-Ala-D-Ala)](n+1)-di-trans,octa-cis-undecaprenyl diphosphate + di-trans,octa-cis-undecaprenyl diphosphate + H(+). It participates in cell wall biogenesis; peptidoglycan biosynthesis. Functionally, peptidoglycan polymerase that catalyzes glycan chain elongation from lipid-linked precursors. The protein is Biosynthetic peptidoglycan transglycosylase of Ralstonia nicotianae (strain ATCC BAA-1114 / GMI1000) (Ralstonia solanacearum).